A 150-amino-acid chain; its full sequence is Large ribosomal subunit protein bL9 (150 aa).

This sequence belongs to the bacterial ribosomal protein bL9 family.

In terms of biological role, binds to the 23S rRNA. This chain is Large ribosomal subunit protein bL9, found in Corynebacterium aurimucosum (strain ATCC 700975 / DSM 44827 / CIP 107346 / CN-1) (Corynebacterium nigricans).